Consider the following 261-residue polypeptide: Carnitinyl-CoA dehydratase (261 aa).

Residue Glu-111 is the Nucleophile of the active site. The active-site Proton acceptor is Glu-131.

The protein belongs to the enoyl-CoA hydratase/isomerase family.

The enzyme catalyses (R)-carnitinyl-CoA = crotonobetainyl-CoA + H2O. It functions in the pathway amine and polyamine metabolism; carnitine metabolism. Its function is as follows. Catalyzes the reversible dehydration of L-carnitinyl-CoA to crotonobetainyl-CoA. The chain is Carnitinyl-CoA dehydratase from Salmonella paratyphi C (strain RKS4594).